The sequence spans 237 residues: Class B acid phosphatase (237 aa).

Residues Met-1–Ala-25 form the signal peptide. Asp-69 serves as the catalytic Nucleophile. Mg(2+) is bound by residues Asp-69 and Asp-71. Asp-71 functions as the Proton donor in the catalytic mechanism. Residues Thr-137–Gly-138 and Lys-177 each bind substrate. Residue Asp-192 participates in Mg(2+) binding.

The protein belongs to the class B bacterial acid phosphatase family. In terms of assembly, homotetramer. The cofactor is Mg(2+).

It localises to the periplasm. It carries out the reaction a phosphate monoester + H2O = an alcohol + phosphate. Functionally, dephosphorylates several organic phosphate monoesters. Also has a phosphotransferase activity catalyzing the transfer of low-energy phosphate groups from organic phosphate monoesters to free hydroxyl groups of various organic compounds. In Klebsiella pneumoniae (strain 342), this protein is Class B acid phosphatase.